A 335-amino-acid polypeptide reads, in one-letter code: MSQILKRYDLDKLAVATIASHTALQILRGAKKYGFRTIAIAKNEDIAQFYKQFFFIDEVWTGDFSNFRKTAERLVAENALLIPHGSYVEYVGWRQALEAPVPTLGCRELLRWEADQYKKMALLEEAGIPIPRVYRSPTEVDGPVIVKFFGAKGGRGYFVAKGREELEARLKALGEEYIIQEYLFGVPAYYHYFASPVYSRIEVFGADIRYESNVDGRTFGWAEPTFVVVGNLSLVLRESLLPIIHKYGVQFAKAVEKRVGCRLAGPYCLESIIKDDMSIVVFEFSGRIVAGTNIYMGYGSPYSVLYFDKPMDMGERIAHEIREAAKAGKLDQLFT.

Residues His-21 and Ser-86 each coordinate 5-amino-1-(5-phospho-beta-D-ribosyl)imidazole-4-carboxamide. Residues Arg-107–Glu-315 enclose the ATP-grasp domain. Residues Pro-137–Tyr-189 and Glu-211 each bind ATP. Asn-231 is a 5-amino-1-(5-phospho-beta-D-ribosyl)imidazole-4-carboxamide binding site. Positions 270 and 283 each coordinate Mg(2+).

Belongs to the phosphohexose mutase family. Requires Mg(2+) as cofactor. Mn(2+) is required as a cofactor.

It catalyses the reaction 5-amino-1-(5-phospho-beta-D-ribosyl)imidazole-4-carboxamide + formate + ATP = 5-formamido-1-(5-phospho-D-ribosyl)imidazole-4-carboxamide + ADP + phosphate. Its pathway is purine metabolism; IMP biosynthesis via de novo pathway; 5-formamido-1-(5-phospho-D-ribosyl)imidazole-4-carboxamide from 5-amino-1-(5-phospho-D-ribosyl)imidazole-4-carboxamide (formate route): step 1/1. Functionally, catalyzes the ATP- and formate-dependent formylation of 5-aminoimidazole-4-carboxamide-1-beta-d-ribofuranosyl 5'-monophosphate (AICAR) to 5-formaminoimidazole-4-carboxamide-1-beta-d-ribofuranosyl 5'-monophosphate (FAICAR) in the absence of folates. The chain is 5-formaminoimidazole-4-carboxamide-1-(beta)-D-ribofuranosyl 5'-monophosphate synthetase from Pyrobaculum arsenaticum (strain DSM 13514 / JCM 11321 / PZ6).